Here is a 369-residue protein sequence, read N- to C-terminus: Anhydro-N-acetylmuramic acid kinase (369 aa).

12 to 19 (GTSMDGVD) is a binding site for ATP.

It belongs to the anhydro-N-acetylmuramic acid kinase family.

It carries out the reaction 1,6-anhydro-N-acetyl-beta-muramate + ATP + H2O = N-acetyl-D-muramate 6-phosphate + ADP + H(+). It participates in amino-sugar metabolism; 1,6-anhydro-N-acetylmuramate degradation. It functions in the pathway cell wall biogenesis; peptidoglycan recycling. Catalyzes the specific phosphorylation of 1,6-anhydro-N-acetylmuramic acid (anhMurNAc) with the simultaneous cleavage of the 1,6-anhydro ring, generating MurNAc-6-P. Is required for the utilization of anhMurNAc either imported from the medium or derived from its own cell wall murein, and thus plays a role in cell wall recycling. This is Anhydro-N-acetylmuramic acid kinase from Shewanella halifaxensis (strain HAW-EB4).